Consider the following 201-residue polypeptide: Reticulon-like protein B10 (201 aa).

In terms of domain architecture, Reticulon spans 14-201; sequence VADLIMWKNR…KPTNKIKKMQ (188 aa). A run of 3 helical transmembrane segments spans residues 25 to 45, 46 to 66, and 135 to 155; these read GGFLLLGSTTLLWFLFEKCGY, SFFPFVVNTQLLSVVILFLWA, and FLNFLTILYLGVVLSLLIPFL.

It is found in the endoplasmic reticulum membrane. This is Reticulon-like protein B10 (RTNLB10) from Arabidopsis thaliana (Mouse-ear cress).